The chain runs to 494 residues: Succinoglycan biosynthesis transport protein ExoT (494 aa).

Transmembrane regions (helical) follow at residues 16–36 (WSVL…PILA), 44–64 (FGAV…GGAG), 82–102 (SVFW…FVFA), 105–125 (LATL…SLLI), 157–177 (LGAV…SLLA), 215–235 (FGMM…MVVI), 253–273 (FASI…FPTF), 297–317 (LLAP…LVLF), 321–341 (WAYA…LTPC), 343–363 (TFIP…WALI), 384–404 (AMIW…WVVF), 421–441 (PMIA…HFGA), and 447–467 (VLQL…LILL).

The protein belongs to the polysaccharide synthase family.

It localises to the cell membrane. It functions in the pathway glycan metabolism; exopolysaccharide biosynthesis. This chain is Succinoglycan biosynthesis transport protein ExoT (exoT), found in Rhizobium meliloti (strain 1021) (Ensifer meliloti).